A 328-amino-acid chain; its full sequence is DNA polymerase IV (328 aa).

The region spanning 6 to 187 is the UmuC domain; that stretch reads IIHIDMDYFF…LDIGDFPGVG (182 aa). Mg(2+) contacts are provided by Asp-10 and Asp-105. Residue Glu-106 is part of the active site.

Belongs to the DNA polymerase type-Y family. As to quaternary structure, monomer. Mg(2+) serves as cofactor.

The protein resides in the cytoplasm. The enzyme catalyses DNA(n) + a 2'-deoxyribonucleoside 5'-triphosphate = DNA(n+1) + diphosphate. Functionally, poorly processive, error-prone DNA polymerase involved in untargeted mutagenesis. Copies undamaged DNA at stalled replication forks, which arise in vivo from mismatched or misaligned primer ends. These misaligned primers can be extended by PolIV. Exhibits no 3'-5' exonuclease (proofreading) activity. May be involved in translesional synthesis, in conjunction with the beta clamp from PolIII. The chain is DNA polymerase IV from Staphylococcus aureus (strain bovine RF122 / ET3-1).